An 81-amino-acid polypeptide reads, in one-letter code: RNA-binding protein KhpA (81 aa).

A KH domain is found at 34–81 (KIALRLSVHKSDTGKVIGKQGRTAKAIRTAVFAAGVQSSKKVQFEIFD).

It belongs to the KhpA RNA-binding protein family. In terms of assembly, forms a complex with KhpB.

It localises to the cytoplasm. Its function is as follows. A probable RNA chaperone. Forms a complex with KhpB which binds to cellular RNA and controls its expression. Plays a role in peptidoglycan (PG) homeostasis and cell length regulation. The sequence is that of RNA-binding protein KhpA from Bacillus subtilis (strain 168).